An 87-amino-acid polypeptide reads, in one-letter code: Small ribosomal subunit protein bS20 (87 aa).

The disordered stretch occupies residues 1 to 27 (MANIKSAKKRAVTSEKRRKHNASRRSM).

It belongs to the bacterial ribosomal protein bS20 family.

Its function is as follows. Binds directly to 16S ribosomal RNA. The sequence is that of Small ribosomal subunit protein bS20 from Erwinia tasmaniensis (strain DSM 17950 / CFBP 7177 / CIP 109463 / NCPPB 4357 / Et1/99).